Reading from the N-terminus, the 454-residue chain is Venom prothrombin activator porpharin-D (454 aa).

A signal peptide spans 1–20 (MAPQLLLCLILTFLWSLPEA). Residues 21–40 (ESNVFLKSKEANRFLQRTKR) constitute a propeptide that is removed on maturation. A Gla domain is found at 41-86 (SNSLFEEFRPGNIERECIEEKCSKEEAREIFKDNEKTEAFWNVYVD). Glu-46, Glu-47, Glu-54, Glu-56, Glu-59, Glu-60, Glu-65, Glu-66, Glu-69, and Glu-75 each carry 4-carboxyglutamate. A disulfide bond links Cys-57 and Cys-62. In terms of domain architecture, EGF-like 1; calcium-binding spans 86-122 (DGDQCSSNPCHYGGTCKDGIGSYTCTCLPNYEGKNCE). Disulfide bonds link Cys-90-Cys-101, Cys-95-Cys-110, Cys-112-Cys-121, Cys-129-Cys-140, Cys-136-Cys-149, Cys-151-Cys-164, Cys-172-Cys-316, Cys-216-Cys-221, Cys-236-Cys-252, Cys-364-Cys-378, and Cys-389-Cys-417. O-linked (Hex...) serine glycosylation occurs at Ser-92. The region spanning 129–164 (CRFFNGNCWHFCKPVQNDTQCSCAESYRLGDDGHSC) is the EGF-like 2 domain. Residues 182-209 (REASLPDFVQSQNATLLKKSDNPSPDIR) constitute a propeptide, activation peptide. Positions 210–441 (IINGMDCKLG…FIPWIKAVMR (232 aa)) constitute a Peptidase S1 domain. Catalysis depends on charge relay system residues His-251 and Asp-296. Ser-393 acts as the Charge relay system in catalysis.

It belongs to the peptidase S1 family. Snake venom subfamily. As to quaternary structure, heterodimer of a light chain and a heavy chain; disulfide-linked. Post-translationally, the vitamin K-dependent, enzymatic carboxylation of some glutamate residues allows the modified protein to bind calcium. In terms of tissue distribution, expressed by the venom gland.

Its subcellular location is the secreted. It carries out the reaction Selective cleavage of Arg-|-Thr and then Arg-|-Ile bonds in prothrombin to form thrombin.. Snake prothrombin activator that attacks the hemostatic system of prey. This protein is functionally similar to blood coagulation factor Xa. In Pseudechis porphyriacus (Red-bellied black snake), this protein is Venom prothrombin activator porpharin-D.